The following is a 127-amino-acid chain: Small ribosomal subunit protein uS12 (127 aa).

Residue D89 is modified to 3-methylthioaspartic acid. Residues 104–127 (TQGVKDRKQARSKYGTKRAKAGKK) are disordered. Over residues 113–127 (ARSKYGTKRAKAGKK) the composition is skewed to basic residues.

Belongs to the universal ribosomal protein uS12 family. In terms of assembly, part of the 30S ribosomal subunit. Contacts proteins S8 and S17. May interact with IF1 in the 30S initiation complex.

Its function is as follows. With S4 and S5 plays an important role in translational accuracy. Interacts with and stabilizes bases of the 16S rRNA that are involved in tRNA selection in the A site and with the mRNA backbone. Located at the interface of the 30S and 50S subunits, it traverses the body of the 30S subunit contacting proteins on the other side and probably holding the rRNA structure together. The combined cluster of proteins S8, S12 and S17 appears to hold together the shoulder and platform of the 30S subunit. The sequence is that of Small ribosomal subunit protein uS12 from Herminiimonas arsenicoxydans.